Here is a 173-residue protein sequence, read N- to C-terminus: Transcription factor E (173 aa).

Residues 6-89 (PLEELLEFVR…YWYVDRETLN (84 aa)) form the HTH TFE/IIEalpha-type domain.

The protein belongs to the TFE family. As to quaternary structure, monomer. Interaction with RNA polymerase subunits RpoF and RpoE is necessary for Tfe stimulatory transcription activity. Able to interact with Tbp and RNA polymerase in the absence of DNA promoter. Interacts both with the preinitiation and elongation complexes.

Its function is as follows. Transcription factor that plays a role in the activation of archaeal genes transcribed by RNA polymerase. Facilitates transcription initiation by enhancing TATA-box recognition by TATA-box-binding protein (Tbp), and transcription factor B (Tfb) and RNA polymerase recruitment. Not absolutely required for transcription in vitro, but particularly important in cases where Tbp or Tfb function is not optimal. It dynamically alters the nucleic acid-binding properties of RNA polymerases by stabilizing the initiation complex and destabilizing elongation complexes. Seems to translocate with the RNA polymerase following initiation and acts by binding to the non template strand of the transcription bubble in elongation complexes. This is Transcription factor E from Ignicoccus hospitalis (strain KIN4/I / DSM 18386 / JCM 14125).